The primary structure comprises 760 residues: MKITCTDLVYVFILLFLNTSCVQAVFSDDAFITDWQLANLGPWEKVIPDSRDRNRVLILSNPTETSCLVSSFNVSSGQILFRNVLPFTIDEIQLDSNDHNAMVCVNSSSNHWQKYDLHDWFLLEEGVDNAPSTTILPQSSYLNDQVSIKNNELHILDEQSKLAEWKLELPQGFNKVEYFHREDPLALVLNVNDTQYMGFSANGTELIPVWQRDEWLTNVVDYAVLDVFDSRDVELNKDMKAELDSNSLWNAYWLRLTTNWNRLINLLKENQFSPGRVFTKLLALDAKDTTVSDLKFGFAKILIVLTHDGFIGGLDMVNKGQLIWKLDLEIDQGVKMFWTDKNHDELVVFSHDGHYLTIEVTKDQPIIKSRSPLSERKTVDSVIRLNEHDHQYLIKFEDKDHLLFKLNPGKNTDVPIVANNHSSSHIFVTEHDTNGIYGYIIENDTVKQTWKKAVNSKEKMVAYSKRETTNLNTLGITLGDKSVLYKYLYPNLAAYLIANEEHHTITFNLIDTITGEILITQEHKDSPDFRFPMDIVFGEYWVVYSYFSSEPVPEQKLVVVELYESLTPDERLSNSSDNFSYDPLTGHINKPQFQTKQFIFPEIIKTMSISKTTDDITTKAIVMELENGQITYIPKLLLNARGKPAEEMAKDKKKEFMATPYTPVIPINDNFIITHFRNLLPGSDSQLISIPTNLESTSIICDLGLDVFCTRITPSGQFDLMSPTFEKGKLLITIFVLLVITYFIRPSVSNKKLKSQWLIK.

An N-terminal signal peptide occupies residues 1-24 (MKITCTDLVYVFILLFLNTSCVQA). Residues 25–723 (VFSDDAFITD…PSGQFDLMSP (699 aa)) are Lumenal-facing. N-linked (GlcNAc...) asparagine glycosylation is found at Asn-73, Asn-106, Asn-192, Asn-202, Asn-420, Asn-443, Asn-574, and Asn-578. A helical transmembrane segment spans residues 724–744 (TFEKGKLLITIFVLLVITYFI). The Cytoplasmic segment spans residues 745–760 (RPSVSNKKLKSQWLIK).

It belongs to the EMC1 family. In terms of assembly, component of the ER membrane protein complex (EMC), which is composed of EMC1, EMC2, EMC3, EMC4, EMC5 and EMC6. Post-translationally, N-glycosylated.

The protein localises to the endoplasmic reticulum membrane. In terms of biological role, part of the endoplasmic reticulum membrane protein complex (EMC) that enables the energy-independent insertion into endoplasmic reticulum membranes of newly synthesized membrane proteins. Preferentially accommodates proteins with transmembrane domains that are weakly hydrophobic or contain destabilizing features such as charged and aromatic residues. Involved in the cotranslational insertion of multi-pass membrane proteins in which stop-transfer membrane-anchor sequences become ER membrane spanning helices. It is also required for the post-translational insertion of tail-anchored/TA proteins in endoplasmic reticulum membranes. By mediating the proper cotranslational insertion of N-terminal transmembrane domains in an N-exo topology, with translocated N-terminus in the lumen of the ER, controls the topology of multi-pass membrane proteins. This is ER membrane protein complex subunit 1 (EMC1) from Saccharomyces cerevisiae (strain ATCC 204508 / S288c) (Baker's yeast).